The chain runs to 625 residues: Interleukin-1 receptor-associated kinase-like 2 (625 aa).

The region spanning 13 to 94 (LDDPCRNMDA…RAAQIILNWK (82 aa)) is the Death domain. Positions 111–181 (KPEKPLAASV…SSDSKDFSTS (71 aa)) are disordered. Position 144 is a phosphoserine (S144). The segment covering 169-181 (LPTSSDSKDFSTS) has biased composition (polar residues). Residues 210-503 (FNQNHKISQG…GSVAAVEEWL (294 aa)) enclose the Protein kinase domain. ATP contacts are provided by residues 216–224 (ISQGTFADV), K237, and 337–340 (KSSN). The disordered stretch occupies residues 513 to 539 (SGLSEGTGSSSNTPEETDDVDNSSLDA). Residues 516-526 (SEGTGSSSNTP) are compositionally biased toward polar residues.

The protein belongs to the protein kinase superfamily. TKL Ser/Thr protein kinase family. Pelle subfamily. As to quaternary structure, interacts with MYD88. IL-1 stimulation leads to the formation of a signaling complex which dissociates from the IL-1 receptor following the binding of PELI1.

Binds to the IL-1 type I receptor following IL-1 engagement, triggering intracellular signaling cascades leading to transcriptional up-regulation and mRNA stabilization. The protein is Interleukin-1 receptor-associated kinase-like 2 (IRAK2) of Pongo abelii (Sumatran orangutan).